Here is a 244-residue protein sequence, read N- to C-terminus: Tegument protein UL51 homolog (244 aa).

Cys10 carries the S-palmitoyl cysteine; by host lipid modification.

It belongs to the herpesviridae UL51 family. As to quaternary structure, oligomerizes. Interacts with ORF55; this interaction mediates ORF55 incorporation to virions. In terms of processing, phosphorylated. Palmitoylation is necessary for Golgi localization.

It localises to the virion tegument. The protein resides in the host cytoplasm. The protein localises to the host Golgi apparatus. Its function is as follows. Plays several roles during the time course of infection, including egress of virus particles from the perinuclear space and secondary envelopment of cytoplasmic capsids that bud into specific trans-Golgi network (TGN)-derived membranes. The polypeptide is Tegument protein UL51 homolog (8) (Equus caballus (Horse)).